Here is a 694-residue protein sequence, read N- to C-terminus: MSDQEFDLSKIRNIGIMAHIDAGKTTTTERILYYAGRTHKIGEVHEGGATMDWMEQEQERGITITSAATTVFWLDCKINIIDTPGHVDFTIEVERSLRVLDGAVAVFDAVSGVEPQSETVWRQANKYGVPRIAFVNKMDRMGADYFAAVESMKEKLGANAVAVHCPIGSESQFVGMVDLISQKALYFLDETLGAKWEEREIPEELKEKCAELRYALLEELATVDESNEAFMMKVLEDPDAITEEEIHSVMRKGVIENKINPVLCGTAFKNKGVQQLLNVIVKWLPSPKDRGTIHGINLKNNEEVYLEPRRDGPLAALAFKIMTDPYVGRITFIRIYSGTLKKGSAILNSTKDKKERISRLLEMHANERTDRDEFTVGDIGACVGLKYSVTGDTLCEENQEIVLERIEIPEPVIDMAIEPKSKGDREKLAQALSALSEEDPTFRVTSNEEIGQTIISGMGELHLDILRDRMIREFKVEANVGKPQVSYKETITTSSNSETKYVKQSGGRGQYAHVCLEIEPNEPGKGNEIVSKIVGGVIPKEYIPAVMKGVEEGLNTGVLAGYGLVDVKVNIVFGSYHEVDSSEMAFKICGSMAVKEACRKAAPVILEPIMKIAVITPEDHLGDVIGDLNRRRGKILGQESSRGMAQVNAEVPLSEMFGYTTSLRSLTSGRATSTMEPAFFAKVPQKIQEEIVKK.

One can recognise a tr-type G domain in the interval 9–288 (SKIRNIGIMA…VIVKWLPSPK (280 aa)). GTP is bound by residues 18–25 (AHIDAGKT), 82–86 (DTPGH), and 136–139 (NKMD).

The protein belongs to the TRAFAC class translation factor GTPase superfamily. Classic translation factor GTPase family. EF-G/EF-2 subfamily.

It localises to the cytoplasm. Functionally, catalyzes the GTP-dependent ribosomal translocation step during translation elongation. During this step, the ribosome changes from the pre-translocational (PRE) to the post-translocational (POST) state as the newly formed A-site-bound peptidyl-tRNA and P-site-bound deacylated tRNA move to the P and E sites, respectively. Catalyzes the coordinated movement of the two tRNA molecules, the mRNA and conformational changes in the ribosome. The chain is Elongation factor G from Chlamydia abortus (strain DSM 27085 / S26/3) (Chlamydophila abortus).